The chain runs to 637 residues: 1-deoxy-D-xylulose-5-phosphate synthase (637 aa).

Thiamine diphosphate contacts are provided by residues H75 and 116–118 (AHS). Mg(2+) is bound at residue D147. Thiamine diphosphate-binding positions include 148 to 149 (GA), N177, Y288, and E370. N177 serves as a coordination point for Mg(2+).

It belongs to the transketolase family. DXPS subfamily. As to quaternary structure, homodimer. Requires Mg(2+) as cofactor. It depends on thiamine diphosphate as a cofactor.

The catalysed reaction is D-glyceraldehyde 3-phosphate + pyruvate + H(+) = 1-deoxy-D-xylulose 5-phosphate + CO2. The protein operates within metabolic intermediate biosynthesis; 1-deoxy-D-xylulose 5-phosphate biosynthesis; 1-deoxy-D-xylulose 5-phosphate from D-glyceraldehyde 3-phosphate and pyruvate: step 1/1. In terms of biological role, catalyzes the acyloin condensation reaction between C atoms 2 and 3 of pyruvate and glyceraldehyde 3-phosphate to yield 1-deoxy-D-xylulose-5-phosphate (DXP). The protein is 1-deoxy-D-xylulose-5-phosphate synthase of Cupriavidus metallidurans (strain ATCC 43123 / DSM 2839 / NBRC 102507 / CH34) (Ralstonia metallidurans).